Reading from the N-terminus, the 186-residue chain is Ribosome-recycling factor (186 aa).

Positions 135–162 (DGMDGLKKAEKDGDIGQDESRAQSERVQ) are disordered.

It belongs to the RRF family.

Its subcellular location is the cytoplasm. Functionally, responsible for the release of ribosomes from messenger RNA at the termination of protein biosynthesis. May increase the efficiency of translation by recycling ribosomes from one round of translation to another. The polypeptide is Ribosome-recycling factor (Sinorhizobium fredii (strain NBRC 101917 / NGR234)).